The following is a 294-amino-acid chain: Phosphatidylserine decarboxylase proenzyme (294 aa).

Active-site charge relay system; for autoendoproteolytic cleavage activity residues include aspartate 88, histidine 145, and serine 248. Catalysis depends on serine 248, which acts as the Schiff-base intermediate with substrate; via pyruvic acid; for decarboxylase activity. Pyruvic acid (Ser); by autocatalysis is present on serine 248.

It belongs to the phosphatidylserine decarboxylase family. PSD-B subfamily. Prokaryotic type I sub-subfamily. Heterodimer of a large membrane-associated beta subunit and a small pyruvoyl-containing alpha subunit. The cofactor is pyruvate. Post-translationally, is synthesized initially as an inactive proenzyme. Formation of the active enzyme involves a self-maturation process in which the active site pyruvoyl group is generated from an internal serine residue via an autocatalytic post-translational modification. Two non-identical subunits are generated from the proenzyme in this reaction, and the pyruvate is formed at the N-terminus of the alpha chain, which is derived from the carboxyl end of the proenzyme. The autoendoproteolytic cleavage occurs by a canonical serine protease mechanism, in which the side chain hydroxyl group of the serine supplies its oxygen atom to form the C-terminus of the beta chain, while the remainder of the serine residue undergoes an oxidative deamination to produce ammonia and the pyruvoyl prosthetic group on the alpha chain. During this reaction, the Ser that is part of the protease active site of the proenzyme becomes the pyruvoyl prosthetic group, which constitutes an essential element of the active site of the mature decarboxylase.

The protein localises to the cell membrane. It carries out the reaction a 1,2-diacyl-sn-glycero-3-phospho-L-serine + H(+) = a 1,2-diacyl-sn-glycero-3-phosphoethanolamine + CO2. It functions in the pathway phospholipid metabolism; phosphatidylethanolamine biosynthesis; phosphatidylethanolamine from CDP-diacylglycerol: step 2/2. Its function is as follows. Catalyzes the formation of phosphatidylethanolamine (PtdEtn) from phosphatidylserine (PtdSer). This chain is Phosphatidylserine decarboxylase proenzyme, found in Herminiimonas arsenicoxydans.